A 306-amino-acid polypeptide reads, in one-letter code: Agmatinase (306 aa).

Mn(2+) is bound by residues histidine 126, aspartate 149, histidine 151, aspartate 153, aspartate 230, and aspartate 232.

It belongs to the arginase family. Agmatinase subfamily. Mn(2+) serves as cofactor.

The catalysed reaction is agmatine + H2O = urea + putrescine. The protein operates within amine and polyamine biosynthesis; putrescine biosynthesis via agmatine pathway; putrescine from agmatine: step 1/1. Functionally, catalyzes the formation of putrescine from agmatine. This Cronobacter sakazakii (strain ATCC BAA-894) (Enterobacter sakazakii) protein is Agmatinase.